The following is a 98-amino-acid chain: UPF0473 protein GTNG_2486 (98 aa).

Belongs to the UPF0473 family.

The polypeptide is UPF0473 protein GTNG_2486 (Geobacillus thermodenitrificans (strain NG80-2)).